Here is a 243-residue protein sequence, read N- to C-terminus: MSDPLIVSYNDSAIYQSDINILKSNQWLNDSIISFYLEWLKDGGEDNKNKIPNQVLLLSPSVVFCCSFVESEQEIQLMFEQPLSLKTKEVIFFPLTNNRDPNVIGGGTHWSLLIFIKSLNKFIYYDSINSFNSSDAIFIISKFKFLLSSPPPKTNLKEFLINQKTPQQQNGYDCGLYVLSIIEELLKLIIKENENNKGEENKISYKDLLLSEFTNELLFKEITPNYIKDKRVEILNTILKLKK.

Residues 12–185 (SAIYQSDINI…LYVLSIIEEL (174 aa)) form a protease region. Catalysis depends on residues histidine 109 and aspartate 126. The active-site Nucleophile is cysteine 174.

It belongs to the peptidase C48 family.

In terms of biological role, protease that catalyzes two essential functions in the nedd8 pathway: processing of full-length nedd8 to its mature form and deconjugation of nedd8 from targeted proteins. The sequence is that of Probable sentrin-specific protease 8 (senp8) from Dictyostelium discoideum (Social amoeba).